Consider the following 238-residue polypeptide: Phosphoribosylaminoimidazole-succinocarboxamide synthase (238 aa).

The protein belongs to the SAICAR synthetase family.

The enzyme catalyses 5-amino-1-(5-phospho-D-ribosyl)imidazole-4-carboxylate + L-aspartate + ATP = (2S)-2-[5-amino-1-(5-phospho-beta-D-ribosyl)imidazole-4-carboxamido]succinate + ADP + phosphate + 2 H(+). The protein operates within purine metabolism; IMP biosynthesis via de novo pathway; 5-amino-1-(5-phospho-D-ribosyl)imidazole-4-carboxamide from 5-amino-1-(5-phospho-D-ribosyl)imidazole-4-carboxylate: step 1/2. The sequence is that of Phosphoribosylaminoimidazole-succinocarboxamide synthase from Desulfitobacterium hafniense (strain DSM 10664 / DCB-2).